The following is a 116-amino-acid chain: MSGIRPVDGRANLTSAQNLLSTGEAEERINWVSKALCRATDPDELFVRGAAQRKAAVICRHCPVMQECGADALDNKVEFGVWGGMTERQRRALLKQHPEVVSWSDYFEKRKRRSVG.

The region spanning 36 to 92 (LCRATDPDELFVRGAAQRKAAVICRHCPVMQECGADALDNKVEFGVWGGMTERQRRA) is the 4Fe-4S Wbl-type domain. The [4Fe-4S] cluster site is built by cysteine 37, cysteine 59, cysteine 62, and cysteine 68.

It belongs to the WhiB family. The cofactor is [4Fe-4S] cluster. The Fe-S cluster can be nitrosylated by nitric oxide (NO). In terms of processing, upon Fe-S cluster removal intramolecular disulfide bonds are formed.

Its subcellular location is the cytoplasm. Its function is as follows. Acts as a transcriptional regulator. Probably redox-responsive. The apo- but not holo-form probably binds DNA. Plays a role in lipooligosaccharide (LOS) biosynthesis by regulating LOS gene expression. The sequence is that of Transcriptional regulator WhiB4 (whiB4) from Mycobacterium marinum (strain ATCC BAA-535 / M).